Reading from the N-terminus, the 428-residue chain is Lipoamide acyltransferase component of branched-chain alpha-keto acid dehydrogenase complex (428 aa).

In terms of domain architecture, Lipoyl-binding spans 3–78; sequence THVIKMPDIG…AVGGELIRLE (76 aa). An N6-lipoyllysine modification is found at Lys-44. The segment at 88-145 is disordered; it reads SPAAATPAAPVAATPEKPKEAPVAAPKAAAEAPRALRDSEAPRQRRQPGERPLASPAV. Low complexity predominate over residues 89–120; the sequence is PAAATPAAPVAATPEKPKEAPVAAPKAAAEAP. Over residues 121-136 the composition is skewed to basic and acidic residues; the sequence is RALRDSEAPRQRRQPG. One can recognise a Peripheral subunit-binding (PSBD) domain in the interval 140 to 177; that stretch reads LASPAVRQRARDLGIELQFVQGSGPAGRVLHEDLDAYL. Active-site residues include His-400 and Asp-404.

The protein belongs to the 2-oxoacid dehydrogenase family. In terms of assembly, forms a 24-polypeptide structural core with octahedral symmetry. The cofactor is (R)-lipoate.

It catalyses the reaction N(6)-[(R)-dihydrolipoyl]-L-lysyl-[protein] + 2-methylpropanoyl-CoA = N(6)-[(R)-S(8)-2-methylpropanoyldihydrolipoyl]-L-lysyl-[protein] + CoA. Functionally, the branched-chain alpha-keto dehydrogenase complex catalyzes the overall conversion of alpha-keto acids to acyl-CoA and CO(2). It contains multiple copies of three enzymatic components: branched-chain alpha-keto acid decarboxylase (E1), lipoamide acyltransferase (E2) and lipoamide dehydrogenase (E3). The protein is Lipoamide acyltransferase component of branched-chain alpha-keto acid dehydrogenase complex (bkdB) of Pseudomonas aeruginosa (strain ATCC 15692 / DSM 22644 / CIP 104116 / JCM 14847 / LMG 12228 / 1C / PRS 101 / PAO1).